Consider the following 173-residue polypeptide: Protein tyrosine phosphatase type IVA 3 (173 aa).

In terms of domain architecture, Tyrosine-protein phosphatase spans 8–161 (APVEVSYKHM…YRPKQRLRFK (154 aa)). The cysteines at positions 49 and 104 are disulfide-linked. Aspartate 72 (proton donor) is an active-site residue. Cysteine 104 functions as the Phosphocysteine intermediate in the catalytic mechanism. Residue arginine 110 participates in substrate binding. The residue at position 170 (cysteine 170) is a Cysteine methyl ester. Cysteine 170 carries the S-farnesyl cysteine lipid modification. Positions 171 to 173 (CVM) are cleaved as a propeptide — removed in mature form.

It belongs to the protein-tyrosine phosphatase family. As to quaternary structure, interacts with tubulin. In terms of processing, farnesylated. Farnesylation is required for membrane targeting. As to expression, mainly expressed in cardiomyocytes and skeletal muscle; also found in pancreas. Consistently overexpressed in colon cancer metastasis.

Its subcellular location is the cell membrane. The protein localises to the early endosome. The enzyme catalyses O-phospho-L-tyrosyl-[protein] + H2O = L-tyrosyl-[protein] + phosphate. Inhibited by sodium orthovanadate and peroxovanadium compounds, and by pentamidine. Functionally, protein tyrosine phosphatase which stimulates progression from G1 into S phase during mitosis. Enhances cell proliferation, cell motility and invasive activity, and promotes cancer metastasis. May be involved in the progression of cardiac hypertrophy by inhibiting intracellular calcium mobilization in response to angiotensin II. The chain is Protein tyrosine phosphatase type IVA 3 (PTP4A3) from Homo sapiens (Human).